We begin with the raw amino-acid sequence, 669 residues long: Zinc finger MYM-type protein 5 (669 aa).

Residues K88, K91, K134, K149, K166, and K225 each participate in a glycyl lysine isopeptide (Lys-Gly) (interchain with G-Cter in SUMO2) cross-link. MYM-type zinc fingers lie at residues 265 to 299 (HLFCSTTCLSSFSHKRTQNTRSIICKKDASTKKAN), 311 to 351 (QEFY…RHEV), 358 to 393 (HKLCSNHCFNKYRLANGLIMNCCEHCGEYMPSKSTG), and 404 to 431 (KRFCCQSCINEYKQMMETKSKKLTASEN). Residues K443, K455, K462, and K552 each participate in a glycyl lysine isopeptide (Lys-Gly) (interchain with G-Cter in SUMO2) cross-link.

As to quaternary structure, interacts (via N-terminal 120 amino acid region) with ETV5 (via C-terminal).

It localises to the nucleus. Functionally, functions as a transcriptional regulator. This Homo sapiens (Human) protein is Zinc finger MYM-type protein 5 (ZMYM5).